Consider the following 323-residue polypeptide: tRNA U34 carboxymethyltransferase (323 aa).

Carboxy-S-adenosyl-L-methionine is bound by residues lysine 91, tryptophan 105, lysine 110, glycine 130, 152–154 (DPT), 181–182 (IE), methionine 196, tyrosine 200, and arginine 315.

This sequence belongs to the class I-like SAM-binding methyltransferase superfamily. CmoB family. Homotetramer.

The catalysed reaction is carboxy-S-adenosyl-L-methionine + 5-hydroxyuridine(34) in tRNA = 5-carboxymethoxyuridine(34) in tRNA + S-adenosyl-L-homocysteine + H(+). Catalyzes carboxymethyl transfer from carboxy-S-adenosyl-L-methionine (Cx-SAM) to 5-hydroxyuridine (ho5U) to form 5-carboxymethoxyuridine (cmo5U) at position 34 in tRNAs. This Salmonella enteritidis PT4 (strain P125109) protein is tRNA U34 carboxymethyltransferase.